A 279-amino-acid chain; its full sequence is Large ribosomal subunit protein uL2 (279 aa).

A disordered region spans residues 224–279; that stretch reads AMNPIDHPHGGGEGRTSGGRHPVTPWGKGTKGNRTRKSKASDKLIVRSRHAKKKGR. Residues 269-279 are compositionally biased toward basic residues; the sequence is VRSRHAKKKGR.

This sequence belongs to the universal ribosomal protein uL2 family. As to quaternary structure, part of the 50S ribosomal subunit. Forms a bridge to the 30S subunit in the 70S ribosome.

In terms of biological role, one of the primary rRNA binding proteins. Required for association of the 30S and 50S subunits to form the 70S ribosome, for tRNA binding and peptide bond formation. It has been suggested to have peptidyltransferase activity; this is somewhat controversial. Makes several contacts with the 16S rRNA in the 70S ribosome. The sequence is that of Large ribosomal subunit protein uL2 from Cereibacter sphaeroides (strain ATCC 17025 / ATH 2.4.3) (Rhodobacter sphaeroides).